Consider the following 117-residue polypeptide: Large ribosomal subunit protein bL19 (117 aa).

The protein belongs to the bacterial ribosomal protein bL19 family.

In terms of biological role, this protein is located at the 30S-50S ribosomal subunit interface and may play a role in the structure and function of the aminoacyl-tRNA binding site. The sequence is that of Large ribosomal subunit protein bL19 from Methylibium petroleiphilum (strain ATCC BAA-1232 / LMG 22953 / PM1).